The chain runs to 228 residues: GrpE protein homolog, mitochondrial (228 aa).

Over residues 46 to 57 (DEAKSEESKENN) the composition is skewed to basic and acidic residues. The disordered stretch occupies residues 46-66 (DEAKSEESKENNEDLTEEQSE).

Belongs to the GrpE family. Component of the PAM complex, at least composed of SSC1 (mtHsp70), MGE1, TIM44, PAM16/TIM16, PAM17 and PAM18/TIM14. Interacts with SSQ1. Post-translationally, the N-terminus is blocked.

The protein localises to the mitochondrion matrix. Its function is as follows. Essential component of the PAM complex, a complex required for the translocation of transit peptide-containing proteins from the inner membrane into the mitochondrial matrix in an ATP-dependent manner. Seems to control the nucleotide-dependent binding of SSC1 to substrate proteins and the association of SSC1 with TIM44. The chain is GrpE protein homolog, mitochondrial (MGE1) from Saccharomyces cerevisiae (strain ATCC 204508 / S288c) (Baker's yeast).